The chain runs to 226 residues: Ribonuclease 3 (226 aa).

Residues 7–134 form the RNase III domain; the sequence is KQNLKKKYGI…FNGALFLDQG (128 aa). E47 contacts Mg(2+). Residue D51 is part of the active site. D120 and E123 together coordinate Mg(2+). E123 is a catalytic residue. Residues 160–226 enclose the DRBM domain; that stretch reads DYKTELQERL…AAQAALDKNK (67 aa). The tract at residues 201–226 is disordered; that stretch reads KVSEGQGRNKKAAEQQAAQAALDKNK. Low complexity predominate over residues 214–226; it reads EQQAAQAALDKNK.

The protein belongs to the ribonuclease III family. Homodimer. Requires Mg(2+) as cofactor.

The protein resides in the cytoplasm. It carries out the reaction Endonucleolytic cleavage to 5'-phosphomonoester.. Digests double-stranded RNA. Involved in the processing of primary rRNA transcript to yield the immediate precursors to the large and small rRNAs (23S and 16S). Processes some mRNAs, and tRNAs when they are encoded in the rRNA operon. Processes pre-crRNA and tracrRNA of type II CRISPR loci if present in the organism. This is Ribonuclease 3 from Lactobacillus johnsonii (strain CNCM I-12250 / La1 / NCC 533).